A 570-amino-acid chain; its full sequence is Sulfite reductase [NADPH] hemoprotein beta-component (570 aa).

Residues Cys-434, Cys-440, Cys-479, and Cys-483 each contribute to the [4Fe-4S] cluster site. Cys-483 serves as a coordination point for siroheme.

The protein belongs to the nitrite and sulfite reductase 4Fe-4S domain family. Alpha(8)-beta(8). The alpha component is a flavoprotein, the beta component is a hemoprotein. Requires siroheme as cofactor. The cofactor is [4Fe-4S] cluster.

It catalyses the reaction hydrogen sulfide + 3 NADP(+) + 3 H2O = sulfite + 3 NADPH + 4 H(+). It participates in sulfur metabolism; hydrogen sulfide biosynthesis; hydrogen sulfide from sulfite (NADPH route): step 1/1. In terms of biological role, component of the sulfite reductase complex that catalyzes the 6-electron reduction of sulfite to sulfide. This is one of several activities required for the biosynthesis of L-cysteine from sulfate. This chain is Sulfite reductase [NADPH] hemoprotein beta-component, found in Escherichia coli O9:H4 (strain HS).